The chain runs to 267 residues: Tryptophan synthase alpha chain (267 aa).

Residues Glu-39 and Asp-50 each act as proton acceptor in the active site.

The protein belongs to the TrpA family. In terms of assembly, tetramer of two alpha and two beta chains.

The enzyme catalyses (1S,2R)-1-C-(indol-3-yl)glycerol 3-phosphate + L-serine = D-glyceraldehyde 3-phosphate + L-tryptophan + H2O. It functions in the pathway amino-acid biosynthesis; L-tryptophan biosynthesis; L-tryptophan from chorismate: step 5/5. Functionally, the alpha subunit is responsible for the aldol cleavage of indoleglycerol phosphate to indole and glyceraldehyde 3-phosphate. The protein is Tryptophan synthase alpha chain of Helicobacter hepaticus (strain ATCC 51449 / 3B1).